We begin with the raw amino-acid sequence, 282 residues long: Putative phosphatase in upp 3'region (282 aa).

Residue D17 is the Nucleophile of the active site. D17 provides a ligand contact to Mg(2+). Residue L18 coordinates phosphate. D19 serves as a coordination point for Mg(2+). Residues 53–54 (TG) and K211 each bind phosphate. Positions 234 and 235 each coordinate Mg(2+). N237 contacts phosphate.

The protein belongs to the HAD-like hydrolase superfamily. Cof family. Requires Mg(2+) as cofactor.

The sequence is that of Putative phosphatase in upp 3'region from Metamycoplasma hominis (Mycoplasma hominis).